The following is a 1616-amino-acid chain: Protein P200 (1616 aa).

Disordered regions lie at residues 1 to 41 (MPKT…DKVE), 878 to 909 (HFQP…QAEF), 931 to 975 (QQLE…LDQN), 1004 to 1083 (DNVE…EPVD), 1100 to 1132 (FDKN…TVGE), and 1159 to 1433 (ISEP…SEEE). A 2 X 26 AA repeats region spans residues 891–1389 (EAKFDSPVEI…QEAKFDSPVE (499 aa)). A compositionally biased stretch (low complexity) spans 938–952 (EETVVTPTEVTAFEP). Basic and acidic residues-rich tracts occupy residues 1012-1029 (QPKE…KELQ) and 1059-1081 (VFEK…KSEP). Tandem repeats lie at residues 1161 to 1186 (EPQV…SPVE) and 1205 to 1236 (EIQP…SPVE). Polar residues-rich tracts occupy residues 1200–1227 (VQTQ…QTPQ) and 1242–1251 (EFSSEPTQQH). Residues 1205-1389 (EIQPVESQPE…QEAKFDSPVE (185 aa)) form a 2 X 32 AA repeats region. The segment covering 1256-1270 (ASFDEPNYDFDEPNY) has biased composition (acidic residues). Residues 1276–1285 (SYDSDLQPSE) show a composition bias toward polar residues. Residues 1288-1302 (YDVDEPNYDFDEPNY) are compositionally biased toward acidic residues. Residues 1309–1323 (SEPQFEPQVEQQPGE) show a composition bias toward low complexity. 2 consecutive repeat copies span residues 1310–1339 (EPQF…SPVE) and 1358–1389 (EIQP…SPVE). Over residues 1353–1380 (VQTQPEIQPVESQPEATFDTVQPEQTPQ) the composition is skewed to polar residues. Low complexity predominate over residues 1392-1406 (QEPQVSSEPEVVVQP). The span at 1416-1433 (VLEEPQADEIQPEASEEE) shows a compositional bias: acidic residues.

Could be an accessory structural component in cytadherence. The polypeptide is Protein P200 (Mycoplasma genitalium (strain ATCC 33530 / DSM 19775 / NCTC 10195 / G37) (Mycoplasmoides genitalium)).